Consider the following 221-residue polypeptide: Ras-related protein RabS (221 aa).

16-23 (GDNQCGKS) contacts GTP. An Effector region motif is present at residues 38 to 47 (GIQLWHGIEI). GTP-binding positions include 71-75 (DGNGG) and 137-140 (NKCD). Cys218 bears the Cysteine methyl ester mark. Cys218 carries the S-geranylgeranyl cysteine lipid modification. The propeptide at 219–221 (IIN) is removed in mature form.

The protein belongs to the small GTPase superfamily. Rab family.

Its subcellular location is the cell membrane. The protein is Ras-related protein RabS (rabS) of Dictyostelium discoideum (Social amoeba).